Reading from the N-terminus, the 837-residue chain is Valine--tRNA ligase (837 aa).

The 'HIGH' region signature appears at 46–56 (PNLTGTLHIGH). The 'KMSKS' region signature appears at 514–518 (KMSKS). An ATP-binding site is contributed by Lys-517. Positions 767-837 (VDDTTQRLKS…QLIAKLTKAH (71 aa)) form a coiled coil.

This sequence belongs to the class-I aminoacyl-tRNA synthetase family. ValS type 1 subfamily. In terms of assembly, monomer.

The protein localises to the cytoplasm. The enzyme catalyses tRNA(Val) + L-valine + ATP = L-valyl-tRNA(Val) + AMP + diphosphate. In terms of biological role, catalyzes the attachment of valine to tRNA(Val). As ValRS can inadvertently accommodate and process structurally similar amino acids such as threonine, to avoid such errors, it has a 'posttransfer' editing activity that hydrolyzes mischarged Thr-tRNA(Val) in a tRNA-dependent manner. This chain is Valine--tRNA ligase, found in Mycoplasma genitalium (strain ATCC 33530 / DSM 19775 / NCTC 10195 / G37) (Mycoplasmoides genitalium).